A 1177-amino-acid chain; its full sequence is Lysylphosphatidylglycerol biosynthesis bifunctional protein LysX (1177 aa).

Disordered stretches follow at residues 1–40 and 61–85; these read MRRA…AKFV and VTLA…PANR. Positions 1 to 676 are phosphatidylglycerol lysyltransferase; the sequence is MRRAGRSRQF…LLHHDGSAPD (676 aa). The span at 8-21 shows a compositional bias: polar residues; sequence RQFSSVEEAFSTSA. Residues 65–82 are compositionally biased toward low complexity; that stretch reads SPGSRSGSGPRSGPRLGP. Transmembrane regions (helical) follow at residues 93 to 113, 135 to 155, 159 to 179, 189 to 209, 227 to 247, and 281 to 301; these read VPAA…LGSV, FPDT…ALTA, IAWL…VADI, IFGE…LVLA, AVLV…VELF, and VFLN…ATIV. The interval 673–693 is disordered; the sequence is SAPDVSGLRPERTDAEEARSR. The segment at 677–1177 is lysine--tRNA ligase; it reads VSGLRPERTD…TLPFPLAKPH (501 aa). Positions 681 to 693 are enriched in basic and acidic residues; the sequence is RPERTDAEEARSR. The Mg(2+) site is built by D1089 and E1096.

In the N-terminal section; belongs to the LPG synthetase family. The protein in the C-terminal section; belongs to the class-II aminoacyl-tRNA synthetase family. Mg(2+) is required as a cofactor.

Its subcellular location is the cell membrane. The enzyme catalyses tRNA(Lys) + L-lysine + ATP = L-lysyl-tRNA(Lys) + AMP + diphosphate. It carries out the reaction L-lysyl-tRNA(Lys) + a 1,2-diacyl-sn-glycero-3-phospho-(1'-sn-glycerol) = a 1,2-diacyl-sn-glycero-3-phospho-1'-(3'-O-L-lysyl)-sn-glycerol + tRNA(Lys). Catalyzes the production of L-lysyl-tRNA(Lys)transfer and the transfer of a lysyl group from L-lysyl-tRNA(Lys) to membrane-bound phosphatidylglycerol (PG), which produces lysylphosphatidylglycerol (LPG), one of the components of the bacterial membrane with a positive net charge. LPG synthesis contributes to the resistance to cationic antimicrobial peptides (CAMPs) and likely protects M.tuberculosis against the CAMPs produced by competiting microorganisms (bacteriocins). In fact, the modification of anionic phosphatidylglycerol with positively charged L-lysine results in repulsion of the peptides. This is Lysylphosphatidylglycerol biosynthesis bifunctional protein LysX (lysX) from Mycobacterium avium (strain 104).